We begin with the raw amino-acid sequence, 924 residues long: Alpha-actinin, sarcomeric (924 aa).

An actin-binding region spans residues 1–250; that stretch reads MMMENGLSME…IMTYVSCYYH (250 aa). 2 consecutive Calponin-homology (CH) domains span residues 34 to 138 and 147 to 253; these read KQQK…LRFA and MTAK…HAFQ. 4 Spectrin repeats span residues 251 to 395, 396 to 510, 511 to 631, and 632 to 744; these read AFQG…TVSD, ISNS…RCQR, ICDQ…TAND, and MTRK…TMET. 2 EF-hand domains span residues 778 to 813 and 819 to 854; these read EQLN…LGYS and QGDL…ESTD. Aspartate 791, asparagine 793, threonine 795, arginine 797, and glutamate 802 together coordinate Ca(2+).

The protein belongs to the alpha-actinin family. As to quaternary structure, homodimer; antiparallel. Interacts with Smn; the interaction occurs in adult thoracic tissues. Larval muscle isoform is expressed in the larval body wall, adult muscles of the head and abdomen and supercontractile muscles of the larva and adult. Adult muscle isoform accumulates within adult fibrillar and tubular muscles.

The protein localises to the cytoplasm. It localises to the myofibril. It is found in the sarcomere. Its subcellular location is the z line. Its function is as follows. F-actin cross-linking protein which is thought to anchor actin to a variety of intracellular structures. This is a bundling protein. The protein is Alpha-actinin, sarcomeric (Actn) of Drosophila melanogaster (Fruit fly).